The following is a 472-amino-acid chain: Pyruvate kinase (472 aa).

Residue R33 participates in substrate binding. The K(+) site is built by N35, S37, and D67. Residue 35–38 (NFSH) coordinates ATP. Residues R74 and K155 each coordinate ATP. E220 is a binding site for Mg(2+). G243, D244, and T276 together coordinate substrate. D244 provides a ligand contact to Mg(2+).

This sequence belongs to the pyruvate kinase family. Homotetramer. It depends on Mg(2+) as a cofactor. K(+) serves as cofactor.

It carries out the reaction pyruvate + ATP = phosphoenolpyruvate + ADP + H(+). Its pathway is carbohydrate degradation; glycolysis; pyruvate from D-glyceraldehyde 3-phosphate: step 5/5. In Mycobacterium tuberculosis (strain CDC 1551 / Oshkosh), this protein is Pyruvate kinase (pyk).